Consider the following 79-residue polypeptide: Putative sulfur carrier protein TM_0983 (79 aa).

C17 functions as the Cysteine persulfide intermediate in the catalytic mechanism.

This sequence belongs to the sulfur carrier protein TusA family.

The polypeptide is Putative sulfur carrier protein TM_0983 (Thermotoga maritima (strain ATCC 43589 / DSM 3109 / JCM 10099 / NBRC 100826 / MSB8)).